The sequence spans 363 residues: Type-2 angiotensin II receptor (363 aa).

The Extracellular segment spans residues 1–45 (MKDNFSFAATSRNITSSLPFVNLNMSGTNDLIFNCSHKPSDKHLE). 4 N-linked (GlcNAc...) asparagine glycosylation sites follow: asparagine 4, asparagine 13, asparagine 24, and asparagine 34. 2 cysteine pairs are disulfide-bonded: cysteine 35-cysteine 290 and cysteine 117-cysteine 195. The helical transmembrane segment at 46-70 (AIPVLYYLIFVIGFAVNIIVVSLFC) threads the bilayer. Residues 71 to 80 (CQKGPKKVSS) are Cytoplasmic-facing. The chain crosses the membrane as a helical span at residues 81–104 (IYIFNLAVADLLLLATLPLWATYY). Tyrosine 103 and tyrosine 104 together coordinate angiotensin II. The Extracellular segment spans residues 105 to 114 (SYRYDWLFGP). The helical transmembrane segment at 115–140 (VMCKVFGSFLTLNMFASIFFITCMSV) threads the bilayer. Topologically, residues 141 to 159 (DRYQSVIYPFLSQRRNPWQ) are cytoplasmic. A helical transmembrane segment spans residues 160–181 (ASYVVPLVWCMACLSSLPTFYF). Arginine 182, tyrosine 204, and lysine 215 together coordinate angiotensin II. The Extracellular portion of the chain corresponds to 182–206 (RDVRTIEYLGVNACVMAFPPEKYAQ). Residues 207–232 (WSAGIALMKNVLGFIIPLIFIATCYF) traverse the membrane as a helical segment. At 233 to 257 (GIRKHLLKTNSYGKNRITRDQVLKM) the chain is on the cytoplasmic side. A helical transmembrane segment spans residues 258 to 281 (AAAVVLAFIICWLPFHVLTFLDAL). Angiotensin II is bound at residue aspartate 279. Over 282-294 (SWMGIINSCEVMA) the chain is Extracellular. Residues 295-320 (VIDLALPFAILLGFTNSCVNPFLYCF) form a helical membrane-spanning segment. Angiotensin II is bound at residue aspartate 297. Residues 321–363 (VGNRFQQKLRSMFRVPITWLQGKRETMSCRKSSSLREMDTFVS) lie on the Cytoplasmic side of the membrane. Positions 324–333 (RFQQKLRSMF) are helix VIII. Serine 354 carries the post-translational modification Phosphoserine; by PKC.

This sequence belongs to the G-protein coupled receptor 1 family. As to quaternary structure, interacts with MTUS1.

It is found in the cell membrane. Receptor for angiotensin II, a vasoconstricting peptide. Signals primarily via a non-canonical G-protein- and beta-arrestin independent pathways. Cooperates with MTUS1 to inhibit ERK2 activation and cell proliferation. The sequence is that of Type-2 angiotensin II receptor (AGTR2) from Meriones unguiculatus (Mongolian jird).